The following is a 156-amino-acid chain: Ribosomal RNA large subunit methyltransferase H (156 aa).

Residues Leu-73, Gly-104, and 123-128 contribute to the S-adenosyl-L-methionine site; that span reads IGPLTL.

It belongs to the RNA methyltransferase RlmH family. In terms of assembly, homodimer.

The protein resides in the cytoplasm. The catalysed reaction is pseudouridine(1915) in 23S rRNA + S-adenosyl-L-methionine = N(3)-methylpseudouridine(1915) in 23S rRNA + S-adenosyl-L-homocysteine + H(+). Specifically methylates the pseudouridine at position 1915 (m3Psi1915) in 23S rRNA. The sequence is that of Ribosomal RNA large subunit methyltransferase H from Stenotrophomonas maltophilia (strain R551-3).